A 1173-amino-acid polypeptide reads, in one-letter code: AT-rich interactive domain-containing protein 5B (1173 aa).

Lys-130 participates in a covalent cross-link: Glycyl lysine isopeptide (Lys-Gly) (interchain with G-Cter in SUMO2). The disordered stretch occupies residues 249–283 (PNLKGRPRKKKPCPQRRDSFSGGKDPNNNSDGKSV). A compositionally biased stretch (basic residues) spans 253 to 262 (GRPRKKKPCP). The residue at position 267 (Ser-267) is a Phosphoserine. The 93-residue stretch at 322–414 (RADEQAFLVA…LILPYERFIK (93 aa)) folds into the ARID domain. The residue at position 340 (Lys-340) is an N6,N6-dimethyllysine. Positions 416–607 (EEDKPLPPIK…QPPLANQSEV (192 aa)) are disordered. Lys-449 is covalently cross-linked (Glycyl lysine isopeptide (Lys-Gly) (interchain with G-Cter in SUMO2)). The segment covering 450-462 (HEISKSKKEKENA) has biased composition (basic and acidic residues). Glycyl lysine isopeptide (Lys-Gly) (interchain with G-Cter in SUMO2) cross-links involve residues Lys-497 and Lys-499. Low complexity predominate over residues 547 to 557 (SAPLAPTPGTG). Residues 593–605 (GFSTTQPPLANQS) are compositionally biased toward polar residues. Glycyl lysine isopeptide (Lys-Gly) (interchain with G-Cter in SUMO2) cross-links involve residues Lys-763 and Lys-769. Disordered stretches follow at residues 777 to 802 (EPRFSFSKHHLSPSKKSRGRRTVEKR), 877 to 924 (KKSA…GTSQ), and 936 to 965 (HPKACRVSPMTMSAPKKYPEALSRSGKPHP). The span at 782-796 (FSKHHLSPSKKSRGR) shows a compositional bias: basic residues. Residues Lys-878, Lys-901, Lys-905, and Lys-920 each participate in a glycyl lysine isopeptide (Lys-Gly) (interchain with G-Cter in SUMO2) cross-link. Glycyl lysine isopeptide (Lys-Gly) (interchain with G-Cter in SUMO2) cross-links involve residues Lys-973, Lys-985, and Lys-998. At Ser-1017 the chain carries Phosphoserine. Residues 1017 to 1055 (SPLDPAKEVSGKEKASEQESEGSKAAHSGHSGGTSEGHK) form a disordered region. A compositionally biased stretch (basic and acidic residues) spans 1021 to 1040 (PAKEVSGKEKASEQESEGSK). Residues Lys-1040 and Lys-1055 each participate in a glycyl lysine isopeptide (Lys-Gly) (interchain with G-Cter in SUMO2) cross-link. A Phosphoserine modification is found at Ser-1118.

It belongs to the ARID5B family. Post-translationally, methylation at Lys-340 prevents DNA-binding. Demethylation by PHF2 promotes recruitment of the PHF2-ARID5B complex to promoters.

The protein localises to the nucleus. In terms of biological role, transcription coactivator that binds to the 5'-AATA[CT]-3' core sequence and plays a key role in adipogenesis and liver development. Acts by forming a complex with phosphorylated PHF2, which mediates demethylation at Lys-340, leading to target the PHF2-ARID5B complex to target promoters, where PHF2 mediates demethylation of dimethylated 'Lys-9' of histone H3 (H3K9me2), followed by transcription activation of target genes. The PHF2-ARID5B complex acts as a coactivator of HNF4A in liver. Required for adipogenesis: regulates triglyceride metabolism in adipocytes by regulating expression of adipogenic genes. Overexpression leads to induction of smooth muscle marker genes, suggesting that it may also act as a regulator of smooth muscle cell differentiation and proliferation. In Bos taurus (Bovine), this protein is AT-rich interactive domain-containing protein 5B (ARID5B).